The primary structure comprises 287 residues: Acetyl-coenzyme A carboxylase carboxyl transferase subunit beta (287 aa).

The region spanning 33-287 (LFSKCPGCKH…TLLAFHGGQA (255 aa)) is the CoA carboxyltransferase N-terminal domain. Zn(2+) is bound by residues Cys-37, Cys-40, Cys-55, and Cys-58. Residues 37-58 (CPGCKHTIYQKDLGNDSVCPNC) form a C4-type zinc finger.

The protein belongs to the AccD/PCCB family. As to quaternary structure, acetyl-CoA carboxylase is a heterohexamer composed of biotin carboxyl carrier protein (AccB), biotin carboxylase (AccC) and two subunits each of ACCase subunit alpha (AccA) and ACCase subunit beta (AccD). The cofactor is Zn(2+).

The protein resides in the cytoplasm. The catalysed reaction is N(6)-carboxybiotinyl-L-lysyl-[protein] + acetyl-CoA = N(6)-biotinyl-L-lysyl-[protein] + malonyl-CoA. Its pathway is lipid metabolism; malonyl-CoA biosynthesis; malonyl-CoA from acetyl-CoA: step 1/1. Component of the acetyl coenzyme A carboxylase (ACC) complex. Biotin carboxylase (BC) catalyzes the carboxylation of biotin on its carrier protein (BCCP) and then the CO(2) group is transferred by the transcarboxylase to acetyl-CoA to form malonyl-CoA. This chain is Acetyl-coenzyme A carboxylase carboxyl transferase subunit beta, found in Streptococcus sanguinis (strain SK36).